Consider the following 796-residue polypeptide: YY1-associated protein 1 (796 aa).

Disordered regions lie at residues 1–45 and 463–488; these read MEEE…ATPS and IQPSPSLQPSFNPGKTPAQSTHSEAP. The span at 23-36 shows a compositional bias: basic and acidic residues; that stretch reads PPDKREGSAVDPGK. Positions 463 to 472 are enriched in low complexity; that stretch reads IQPSPSLQPS. Residues 473 to 485 are compositionally biased toward polar residues; the sequence is FNPGKTPAQSTHS. Serine 724 carries the phosphoserine modification. The disordered stretch occupies residues 755–776; that stretch reads RQALEPLPQGIQESLNNSSPGD. A compositionally biased stretch (polar residues) spans 765-774; sequence IQESLNNSSP.

In terms of assembly, interacts with YY1. Interacts with MAD2L2. Interacts with INO80. In terms of tissue distribution, ubiquitous. Detected in small intestine, skeletal muscle, lung, pancreas, brain, stomach, spleen, colon and heart. Detected at very low levels in healthy liver. Highly expressed in most liver carcinomas.

The protein localises to the cytoplasm. It localises to the nucleus. The protein resides in the nucleoplasm. Its subcellular location is the nucleolus. Functionally, associates with the INO80 chromatin remodeling complex, which is responsible for transcriptional regulation, DNA repair, and replication. Enhances transcription activation by YY1. Plays a role in cell cycle regulation. The polypeptide is YY1-associated protein 1 (Homo sapiens (Human)).